The following is a 357-amino-acid chain: UDP-xylose transporter 3 (357 aa).

A run of 10 helical transmembrane segments spans residues 7–27, 31–51, 75–95, 100–120, 132–152, 154–174, 194–214, 224–244, 250–270, and 280–300; these read FQLG…SIVI, ALIS…HLLV, VMGF…SLGF, FYQM…TLFF, LTIL…LNML, SVLS…TNTI, AITL…QNVF, FFIV…FLVI, VTYQ…GYVL, and ILGI…CSIE. Serine 334 is modified (phosphoserine).

The protein belongs to the TPT transporter family. TPT (TC 2.A.7.9) subfamily. In terms of tissue distribution, ubiquitous.

The protein resides in the golgi apparatus membrane. Nucleotide-sugar transporter that transports UDP-xylose and UMP in a strict counter-exchange mode. The polypeptide is UDP-xylose transporter 3 (Arabidopsis thaliana (Mouse-ear cress)).